An 823-amino-acid polypeptide reads, in one-letter code: DNA ligase (823 aa).

NAD(+) is bound by residues D31–D35 and S73–Q74. K100 serves as the catalytic N6-AMP-lysine intermediate. Residues R121, E163, K275, and K296 each contribute to the NAD(+) site. Residues C387, C390, C403, and C408 each contribute to the Zn(2+) site. BRCT domains are found at residues Q562 to T655, E654 to V742, and H741 to T823.

The protein belongs to the NAD-dependent DNA ligase family. LigA subfamily. It depends on Mg(2+) as a cofactor. Mn(2+) is required as a cofactor.

It catalyses the reaction NAD(+) + (deoxyribonucleotide)n-3'-hydroxyl + 5'-phospho-(deoxyribonucleotide)m = (deoxyribonucleotide)n+m + AMP + beta-nicotinamide D-nucleotide.. DNA ligase that catalyzes the formation of phosphodiester linkages between 5'-phosphoryl and 3'-hydroxyl groups in double-stranded DNA using NAD as a coenzyme and as the energy source for the reaction. It is essential for DNA replication and repair of damaged DNA. The polypeptide is DNA ligase (Treponema pallidum (strain Nichols)).